The following is a 529-amino-acid chain: MFTPTDISGEPSAVGTQWTPYLSHPVDFGAQHFLEAMLNVISQPNINSSVIMRADIISDSLNMMPNIMGTDKANEGFIFDTHEGPVDDDKKDTDKDKNTPVPPNLQDYEPRQVEVTPCPVKRVIVRRIIPRNPQNDFSVNQTCIVHSDKPLWDSDGKETSEGAKIAISYISHHDHPKSCPYYLPCVKAVLLYFDGSAISVYYEKYTDYELSAEQEERCGRIALHLLHTVFRHSSGQKAGYKKRVHHDMIIDRIKFQDRYIYLKQKYAHSLVSSWVESTDPRKHVFEDLAIAAFLIELWGQMYKNKDDIYFYDLGCGNGLLVNILIKEGYVGEGVDARARKSWQTYEPEVTQKLLEKIVVPTVLLDQMVGQAQYLPPHAAEKRLAEANGLATDPRVFQTAGLPENAFLIGNHSDELTCWIPLMDRPFMVIPCCSHALSGEKKRFPPTSSDPEEKSTYRSLVGHVEQLSSKIGWQVEKEYLRIPSTRNAAVIGRTRVEPQMNIFEILYSEGGGEGWVERARDLCAKSPRNH.

Positions I78–D107 are disordered. Positions D80–N98 are enriched in basic and acidic residues.

Belongs to the TRM44 family.

Its subcellular location is the cytoplasm. The catalysed reaction is uridine(44) in tRNA(Ser) + S-adenosyl-L-methionine = 2'-O-methyluridine(44) in tRNA(Ser) + S-adenosyl-L-homocysteine + H(+). Its function is as follows. Probable adenosyl-L-methionine (AdoMet)-dependent tRNA (uracil-O(2)-)-methyltransferase. The polypeptide is tRNA (uracil-O(2)-)-methyltransferase (TRM44) (Yarrowia lipolytica (strain CLIB 122 / E 150) (Yeast)).